Here is a 377-residue protein sequence, read N- to C-terminus: MALYSWVQRGWRCGQTWAPLLGGGYRELSATQARQLLGRRFNLLLQQKCGFRKAPRKVEPRRSDTGSSGEAYKRSALIPPLEETVFYPSPYPVRTLLKPFFFTVGFTGCAFGSAAIWQYESLKSRVQSYFDGIKADWLDSIRPQKEGNLRKEINKWWNSLSDGQRTVTGIIAANALVFCLWRVPSLHRTMIRYFTSNPASKVLCSPMLLSTFSHFSLFHMAANMYVLWSFSTSIVNILGQEQFVAVYLSAGVISNFVSYVCKVATGRYGPSLGASGAIMTVLAAVCTKIPEGRLAIIFLPVFTFTAGNALKAIIAMDTAGMILGWKFFDHAAHLGGALFGIWYITYGHELIWKNREPLVKIWHEIRTNGPKKGGGSK.

The N-terminal 50 residues, 1 to 50 (MALYSWVQRGWRCGQTWAPLLGGGYRELSATQARQLLGRRFNLLLQQKCG), are a transit peptide targeting the mitochondrion. At 51–95 (FRKAPRKVEPRRSDTGSSGEAYKRSALIPPLEETVFYPSPYPVRT) the chain is on the mitochondrial matrix side. 2 positions are modified to phosphoserine: serine 63 and serine 68. Residues 96–116 (LLKPFFFTVGFTGCAFGSAAI) form a helical membrane-spanning segment. Residues 117–165 (WQYESLKSRVQSYFDGIKADWLDSIRPQKEGNLRKEINKWWNSLSDGQR) are Mitochondrial intermembrane-facing. A helical membrane pass occupies residues 166–186 (TVTGIIAANALVFCLWRVPSL). Over 187–214 (HRTMIRYFTSNPASKVLCSPMLLSTFSH) the chain is Mitochondrial matrix. The helical transmembrane segment at 215 to 235 (FSLFHMAANMYVLWSFSTSIV) threads the bilayer. Topologically, residues 236–242 (NILGQEQ) are mitochondrial intermembrane. Residues 243–263 (FVAVYLSAGVISNFVSYVCKV) traverse the membrane as a helical segment. The Mitochondrial matrix segment spans residues 264–268 (ATGRY). The chain crosses the membrane as a helical span at residues 269–289 (GPSLGASGAIMTVLAAVCTKI). Serine 275 (nucleophile) is an active-site residue. The Mitochondrial intermembrane segment spans residues 290–293 (PEGR). Residues 294-314 (LAIIFLPVFTFTAGNALKAII) form a helical membrane-spanning segment. Residues 315 to 331 (AMDTAGMILGWKFFDHA) are Mitochondrial matrix-facing. A helical membrane pass occupies residues 332-352 (AHLGGALFGIWYITYGHELIW). Histidine 333 is an active-site residue. Residues 353–377 (KNREPLVKIWHEIRTNGPKKGGGSK) are Mitochondrial intermembrane-facing.

Belongs to the peptidase S54 family. As to quaternary structure, interacts with PSEN1 and PSEN2. Binds OPA1. Post-translationally, P-beta is proteolytically processed (beta-cleavage) in a PARL-dependent manner.

It localises to the mitochondrion inner membrane. The protein localises to the nucleus. The enzyme catalyses Cleaves type-1 transmembrane domains using a catalytic dyad composed of serine and histidine that are contributed by different transmembrane domains.. Functionally, required for the control of apoptosis during postnatal growth. Essential for proteolytic processing of an antiapoptotic form of OPA1 which prevents the release of mitochondrial cytochrome c in response to intrinsic apoptotic signals. Required for the maturation of PINK1 into its 52kDa mature form after its cleavage by mitochondrial-processing peptidase (MPP). Promotes cleavage of serine/threonine-protein phosphatase PGAM5 in damaged mitochondria in response to loss of mitochondrial membrane potential. Mediates differential cleavage of PINK1 and PGAM5 depending on the health status of mitochondria, disassociating from PINK1 and associating with PGAM5 in response to mitochondrial membrane potential loss. Required for processing of CLPB into a form with higher protein disaggregase activity by removing an autoinhibitory N-terminal peptide. Promotes processing of DIABLO/SMAC in the mitochondrion which is required for DIABLO apoptotic activity. Also required for cleavage of STARD7 and TTC19. Promotes changes in mitochondria morphology regulated by phosphorylation of P-beta domain. This chain is Presenilin-associated rhomboid-like protein, mitochondrial, found in Rattus norvegicus (Rat).